Consider the following 243-residue polypeptide: Bidirectional sugar transporter SWEET2a (243 aa).

At 1–23 the chain is on the extracellular side; the sequence is MDWAAPALTSFVADSSYRHLCCY. The chain crosses the membrane as a helical span at residues 24–44; sequence GAGIAGNVFAFVLFISPLPTF. The MtN3/slv 1 domain occupies 24–111; the sequence is GAGIAGNVFA…AVFIAFADAK (88 aa). Topologically, residues 45–57 are cytoplasmic; that stretch reads KRIVRNGSTEQFS. Residues 58–80 traverse the membrane as a helical segment; that stretch reads AMPYIYSLLNCLICMWYGLPFVS. At 81–89 the chain is on the extracellular side; that stretch reads YGVVLVATV. Residues 90-110 form a helical membrane-spanning segment; sequence NSIGAVFQLAYTAVFIAFADA. Topologically, residues 111 to 117 are cytoplasmic; sequence KQRLKVS. The chain crosses the membrane as a helical span at residues 118-138; the sequence is ALLAAVFVVFGLIVFVSLALL. Over 139–145 the chain is Extracellular; it reads DHPTRQM. A helical membrane pass occupies residues 146–166; sequence FVGYLSVASLIFMFASPLSII. Residues 147 to 230 enclose the MtN3/slv 2 domain; it reads VGYLSVASLI…VLYAYFRKGS (84 aa). Topologically, residues 167 to 179 are cytoplasmic; that stretch reads NLVIRTKSVEYMP. Residues 180 to 200 traverse the membrane as a helical segment; sequence FYLSLSMFLMSASFFGYGVLL. At 201-202 the chain is on the extracellular side; it reads ND. Residues 203 to 223 form a helical membrane-spanning segment; it reads FFIYIPNGIGTILGIIQLVLY. At 224 to 243 the chain is on the cytoplasmic side; it reads AYFRKGSSEEAKLPLLVTHT.

It belongs to the SWEET sugar transporter family. Forms homooligomers and/or heterooligomers.

The protein localises to the cell membrane. Functionally, mediates both low-affinity uptake and efflux of sugar across the plasma membrane. This Sorghum bicolor (Sorghum) protein is Bidirectional sugar transporter SWEET2a.